The primary structure comprises 250 residues: DNA repair protein RecO (250 aa).

It belongs to the RecO family.

In terms of biological role, involved in DNA repair and RecF pathway recombination. The chain is DNA repair protein RecO from Lactobacillus acidophilus (strain ATCC 700396 / NCK56 / N2 / NCFM).